Reading from the N-terminus, the 434-residue chain is MAKIVKIAGREIIDSRGNPTVEVDVRLGDGTLGRAAVPSGASTGSREALELRDGDKKRFGGKGVLKAVSNVNDIIAPKLTGLEITKQQDIDDIMIKLDGTDFKSSLGANAVLGVSLACAKAGSNSNKLPVYEYVREIYNVKSDKYVLPVPLMNIINGGEHADNNVDLQEFMIAPVSAPTFREALRMGCEVFHGLKKVLNEKGYATGVGDEGGFAPNLKSNAQALEVICEAVKVAGYEVGRDIVFALDVAASELYENNKYTLEGEVKEKVKTSKDMIAFYGDLLKEYPIISIEDGLSESDWDGWKILTEKLKSRLQLVGDDLFVTNTKIFKDGIDKGIANSILIKVNQIGSLSETVAAVQMAYKAGYTAVMSHRSGETEDSIIADLAVALNTGQIKTGSASRTDRMCKYNQLLRIEEELGSKSAYLGKSAFSSIK.

Residue glutamine 168 participates in (2R)-2-phosphoglycerate binding. Glutamate 210 serves as the catalytic Proton donor. 3 residues coordinate Mg(2+): aspartate 247, glutamate 292, and aspartate 319. Positions 344, 373, 374, and 395 each coordinate (2R)-2-phosphoglycerate. Lysine 344 functions as the Proton acceptor in the catalytic mechanism.

It belongs to the enolase family. It depends on Mg(2+) as a cofactor.

The protein resides in the cytoplasm. The protein localises to the secreted. Its subcellular location is the cell surface. It catalyses the reaction (2R)-2-phosphoglycerate = phosphoenolpyruvate + H2O. Its pathway is carbohydrate degradation; glycolysis; pyruvate from D-glyceraldehyde 3-phosphate: step 4/5. Its function is as follows. Catalyzes the reversible conversion of 2-phosphoglycerate (2-PG) into phosphoenolpyruvate (PEP). It is essential for the degradation of carbohydrates via glycolysis. The chain is Enolase from Endomicrobium trichonymphae.